Reading from the N-terminus, the 425-residue chain is Histidine--tRNA ligase (425 aa).

The protein belongs to the class-II aminoacyl-tRNA synthetase family. In terms of assembly, homodimer.

The protein localises to the cytoplasm. The enzyme catalyses tRNA(His) + L-histidine + ATP = L-histidyl-tRNA(His) + AMP + diphosphate + H(+). This chain is Histidine--tRNA ligase, found in Chlorobium chlorochromatii (strain CaD3).